Consider the following 219-residue polypeptide: Large ribosomal subunit protein uL3 (219 aa).

Residues 134–153 (RASHGNSRSHNVPGSIGMAQ) are disordered. Q153 carries the N5-methylglutamine modification.

It belongs to the universal ribosomal protein uL3 family. Part of the 50S ribosomal subunit. Forms a cluster with proteins L14 and L19. In terms of processing, methylated by PrmB.

Its function is as follows. One of the primary rRNA binding proteins, it binds directly near the 3'-end of the 23S rRNA, where it nucleates assembly of the 50S subunit. The polypeptide is Large ribosomal subunit protein uL3 (Paraburkholderia phytofirmans (strain DSM 17436 / LMG 22146 / PsJN) (Burkholderia phytofirmans)).